The primary structure comprises 563 residues: Chitinase A (563 aa).

Positions 1-23 (MRKFNKPLLALLIGSTLCSAAQA) are cleaved as a signal peptide. One can recognise a GH18 domain in the interval 158–559 (KVVGSYFVEW…NSMNASLGNS (402 aa)). The active-site Proton donor is Glu315.

Belongs to the glycosyl hydrolase 18 family. Chitinase class II subfamily.

It carries out the reaction Random endo-hydrolysis of N-acetyl-beta-D-glucosaminide (1-&gt;4)-beta-linkages in chitin and chitodextrins.. The polypeptide is Chitinase A (chiA) (Serratia marcescens).